Consider the following 55-residue polypeptide: Protein CADMIUM TOLERANCE 1 (55 aa).

The chain crosses the membrane as a helical span at residues 24-40; the sequence is GCLYACIFTALCCFCCY.

This sequence belongs to the CYSTM1 family.

It is found in the cell membrane. It localises to the secreted. The protein localises to the cell wall. Functionally, confers resistance to heavy metal ions (e.g. cadmium (CdCl(2)) and copper (CuCl(2))) by chelating them at the plasma membrane of root cells, thus stopping their entry and reducing their accumulation. The chain is Protein CADMIUM TOLERANCE 1 from Digitaria ciliaris (Southern crabgrass).